We begin with the raw amino-acid sequence, 55 residues long: Seripauperin-7 (55 aa).

The signal sequence occupies residues 1–20; sequence MVKLTSIAAGVAAIAAGASA.

Belongs to the SRP1/TIP1 family. Seripauperin subfamily.

The protein is Seripauperin-7 (PAU7) of Saccharomyces cerevisiae (strain ATCC 204508 / S288c) (Baker's yeast).